A 169-amino-acid polypeptide reads, in one-letter code: Myosin regulatory light chain 11 (169 aa).

A N,N,N-trimethylalanine modification is found at alanine 2. A phosphoserine mark is found at serine 15 and serine 16. Phosphothreonine occurs at positions 25 and 35. An EF-hand 1 domain is found at 25–60; the sequence is TQIQEFKEAFTVIDQNRDGIIDKEDLRDTFAAMGRL. Ca(2+) contacts are provided by aspartate 38, asparagine 40, aspartate 42, and aspartate 49. Phosphoserine is present on serine 75. EF-hand domains follow at residues 95–130 and 131–166; these read DPEDVITGAFKVLDPEGKGTIKKQFLEELLTTQCDR and FSQEEIKNMWAAFPPDVGGNVDYKNICYVITHGDAK. Position 101 is a phosphothreonine (threonine 101).

In terms of assembly, myosin is a hexamer of 2 heavy chains and 4 light chains.

In terms of biological role, myosin regulatory subunit that plays an essential to maintain muscle integrity during early development. Plays a role in muscle contraction. The polypeptide is Myosin regulatory light chain 11 (Myl11) (Rattus norvegicus (Rat)).